The sequence spans 336 residues: Glycerol-3-phosphate dehydrogenase [NAD(P)+] (336 aa).

The NADPH site is built by Ser16, Tyr17, His37, and Lys111. Sn-glycerol 3-phosphate contacts are provided by Lys111, Gly140, and Thr142. An NADPH-binding site is contributed by Ala144. Lys196, Asp249, Ser259, Arg260, and Asn261 together coordinate sn-glycerol 3-phosphate. Lys196 serves as the catalytic Proton acceptor. Arg260 contacts NADPH. NADPH-binding residues include Val284 and Glu286.

The protein belongs to the NAD-dependent glycerol-3-phosphate dehydrogenase family.

The protein localises to the cytoplasm. It catalyses the reaction sn-glycerol 3-phosphate + NAD(+) = dihydroxyacetone phosphate + NADH + H(+). It carries out the reaction sn-glycerol 3-phosphate + NADP(+) = dihydroxyacetone phosphate + NADPH + H(+). It functions in the pathway membrane lipid metabolism; glycerophospholipid metabolism. Its function is as follows. Catalyzes the reduction of the glycolytic intermediate dihydroxyacetone phosphate (DHAP) to sn-glycerol 3-phosphate (G3P), the key precursor for phospholipid synthesis. The chain is Glycerol-3-phosphate dehydrogenase [NAD(P)+] from Actinobacillus pleuropneumoniae serotype 3 (strain JL03).